The sequence spans 121 residues: Heme-degrading monooxygenase (121 aa).

The 100-residue stretch at 2–101 (IIVTNTIKVE…EQREDRKGIV (100 aa)) folds into the ABM domain. Position 6 (Asn-6) interacts with Fe cation. Residues 76-98 (KSDSFKKAHGRTKDTREQREDRK) are disordered. Residues 78–98 (DSFKKAHGRTKDTREQREDRK) are compositionally biased toward basic and acidic residues. His-84 contributes to the heme binding site.

Belongs to the antibiotic biosynthesis monooxygenase family. Heme-degrading monooxygenase IsdG subfamily. In terms of assembly, homodimer.

The protein resides in the cytoplasm. The catalysed reaction is heme b + 3 reduced [NADPH--hemoprotein reductase] + 3 O2 = biliverdin IXalpha + CO + Fe(2+) + 3 oxidized [NADPH--hemoprotein reductase] + 3 H2O + H(+). Its function is as follows. Allows bacterial pathogens to use the host heme as an iron source. Catalyzes the oxidative degradation of the heme macrocyclic porphyrin ring to the biliverdin in the presence of a suitable electron donor such as ascorbate or NADPH--cytochrome P450 reductase, with subsequent release of free iron. The protein is Heme-degrading monooxygenase of Listeria welshimeri serovar 6b (strain ATCC 35897 / DSM 20650 / CCUG 15529 / CIP 8149 / NCTC 11857 / SLCC 5334 / V8).